We begin with the raw amino-acid sequence, 463 residues long: uncharacterized protein (463 aa).

Helical transmembrane passes span 6 to 26 (ILPV…FMLL), 31 to 51 (TFIS…SLSA), 60 to 80 (FIYA…IVSM), 101 to 123 (VRGP…LFFW), 130 to 152 (LIGA…AAMA), 189 to 209 (ASIP…FIMI), 242 to 262 (SILA…MLLF), 269 to 289 (ATAL…FFVY), 304 to 324 (GFKF…FFYL), 413 to 433 (AIWV…AAIC), and 443 to 463 (KNFI…VMML).

Its subcellular location is the cell membrane. This is an uncharacterized protein from Bacillus subtilis (strain 168).